The sequence spans 225 residues: Probable CDP-diacylglycerol--inositol 3-phosphatidyltransferase 2 (225 aa).

Transmembrane regions (helical) follow at residues 6-26 (PATLSVYLYIPNIVGYMRVLL) and 29-49 (IAFSVCFSNKTLFSLLYFFSF). Mg(2+) contacts are provided by Asp52 and Asp55. A CDP-1,2-diacyl-sn-glycerol is bound by residues Gly56, Arg60, and Ser66. The Mg(2+) site is built by Asp73 and Asp77. Asp77 acts as the Proton acceptor in catalysis. 3 helical membrane passes run 84–104 (LLVILSQIYRPSLVFLSLLAL), 143–163 (MFMGYCCVSCEVLYIILLLIA), and 184–204 (LSLLLALSIFGWSIKQIINVI).

Belongs to the CDP-alcohol phosphatidyltransferase class-I family. Mg(2+) is required as a cofactor. Mn(2+) serves as cofactor.

The protein localises to the membrane. It carries out the reaction a CDP-1,2-diacyl-sn-glycerol + myo-inositol = a 1,2-diacyl-sn-glycero-3-phospho-(1D-myo-inositol) + CMP + H(+). Functionally, catalyzes the biosynthesis of phosphatidylinositol (PtdIns) as well as PtdIns:inositol exchange reaction. May thus act to reduce an excessive cellular PtdIns content. The exchange activity is due to the reverse reaction of PtdIns synthase and is dependent on CMP, which is tightly bound to the enzyme. The polypeptide is Probable CDP-diacylglycerol--inositol 3-phosphatidyltransferase 2 (PIS2) (Arabidopsis thaliana (Mouse-ear cress)).